Reading from the N-terminus, the 574-residue chain is Putative ABC transporter ATP-binding protein VV2_1533 (574 aa).

ABC transporter domains follow at residues 3-244 (IEFS…GIRE) and 299-533 (LDVR…ANLT). ATP is bound by residues 37 to 44 (GPSGSGKS) and 332 to 339 (GKNGSGKS).

The protein belongs to the ABC transporter superfamily.

It localises to the cell inner membrane. Functionally, probably part of an ABC transporter complex. Responsible for energy coupling to the transport system. The polypeptide is Putative ABC transporter ATP-binding protein VV2_1533 (Vibrio vulnificus (strain CMCP6)).